The chain runs to 410 residues: Riboflavin biosynthesis protein RibBA (410 aa).

The tract at residues 1-205 (MENKRIDTIE…IKDLVAFQMR (205 aa)) is DHBP synthase. D-ribulose 5-phosphate is bound by residues 30-31 (RE), D35, 144-148 (RVGHT), and E168. E31 is a Mg(2+) binding site. Residue H147 coordinates Mg(2+). The interval 206 to 410 (RSKLVQRAVE…ISCSCGSGNH (205 aa)) is GTP cyclohydrolase II. 256-260 (RVHSQ) lines the GTP pocket. Zn(2+) is bound by residues C261, C272, and C274. GTP is bound by residues Q277, 299–301 (EGR), and T321. Catalysis depends on D333, which acts as the Proton acceptor; for GTP cyclohydrolase activity. The active-site Nucleophile; for GTP cyclohydrolase activity is the R335. Residues T356 and K361 each contribute to the GTP site.

In the N-terminal section; belongs to the DHBP synthase family. The protein in the C-terminal section; belongs to the GTP cyclohydrolase II family. Requires Mg(2+) as cofactor. It depends on Mn(2+) as a cofactor. Zn(2+) serves as cofactor.

The catalysed reaction is D-ribulose 5-phosphate = (2S)-2-hydroxy-3-oxobutyl phosphate + formate + H(+). It carries out the reaction GTP + 4 H2O = 2,5-diamino-6-hydroxy-4-(5-phosphoribosylamino)-pyrimidine + formate + 2 phosphate + 3 H(+). Its pathway is cofactor biosynthesis; riboflavin biosynthesis; 2-hydroxy-3-oxobutyl phosphate from D-ribulose 5-phosphate: step 1/1. It functions in the pathway cofactor biosynthesis; riboflavin biosynthesis; 5-amino-6-(D-ribitylamino)uracil from GTP: step 1/4. In terms of biological role, catalyzes the conversion of D-ribulose 5-phosphate to formate and 3,4-dihydroxy-2-butanone 4-phosphate. Its function is as follows. Catalyzes the conversion of GTP to 2,5-diamino-6-ribosylamino-4(3H)-pyrimidinone 5'-phosphate (DARP), formate and pyrophosphate. The sequence is that of Riboflavin biosynthesis protein RibBA from Chlorobium phaeovibrioides (strain DSM 265 / 1930) (Prosthecochloris vibrioformis (strain DSM 265)).